A 44-amino-acid chain; its full sequence is Cytochrome b559 subunit beta (44 aa).

Residues 19 to 35 (WLAVHTLGVPTVFFLGA) traverse the membrane as a helical segment. Histidine 23 is a binding site for heme.

It belongs to the PsbE/PsbF family. As to quaternary structure, heterodimer of an alpha subunit and a beta subunit. PSII is composed of 1 copy each of membrane proteins PsbA, PsbB, PsbC, PsbD, PsbE, PsbF, PsbH, PsbI, PsbJ, PsbK, PsbL, PsbM, PsbT, PsbX, PsbY, PsbZ, Psb30/Ycf12, peripheral proteins PsbO, CyanoQ (PsbQ), PsbU, PsbV and a large number of cofactors. It forms dimeric complexes. Heme b is required as a cofactor.

It localises to the cellular thylakoid membrane. This b-type cytochrome is tightly associated with the reaction center of photosystem II (PSII). PSII is a light-driven water:plastoquinone oxidoreductase that uses light energy to abstract electrons from H(2)O, generating O(2) and a proton gradient subsequently used for ATP formation. It consists of a core antenna complex that captures photons, and an electron transfer chain that converts photonic excitation into a charge separation. The chain is Cytochrome b559 subunit beta from Trichodesmium erythraeum (strain IMS101).